A 315-amino-acid chain; its full sequence is Acetaldehyde dehydrogenase (315 aa).

Residue 13–16 (SGNI) coordinates NAD(+). Residue C143 is the Acyl-thioester intermediate of the active site. Residues 174-182 (SAGPGTRKN) and N285 each bind NAD(+).

Belongs to the acetaldehyde dehydrogenase family.

It catalyses the reaction acetaldehyde + NAD(+) + CoA = acetyl-CoA + NADH + H(+). This Shewanella woodyi (strain ATCC 51908 / MS32) protein is Acetaldehyde dehydrogenase.